Reading from the N-terminus, the 279-residue chain is CDP-paratose synthase (279 aa).

Tyr-115 serves as the catalytic Proton acceptor.

This sequence belongs to the NAD(P)-dependent epimerase/dehydratase family.

The enzyme catalyses CDP-alpha-D-paratose + NADP(+) = CDP-4-dehydro-3,6-dideoxy-alpha-D-glucose + NADPH + H(+). The protein operates within nucleotide-sugar biosynthesis; CDP-3,6-dideoxy-D-mannose biosynthesis; CDP-3,6-dideoxy-D-mannose from CTP and alpha-D-glucose 1-phosphate: step 4/5. In terms of biological role, catalyzes synthesis of paratose and tyvelose, unusual 3,6-dideoxyhexose sugars that form part of the O-antigen in the lipopolysaccharides of several enteric bacteria. The protein is CDP-paratose synthase (rfbS) of Salmonella typhi.